We begin with the raw amino-acid sequence, 138 residues long: MDILPYLHMSHGKCPLLVRGKGEMEGEALLSCLAMNSLGEQEACLDLGSKTPSLEISSNNQERPTNREETGIICPERLFIYSSKDSSKRLPGGLCIKNKTTCVPVQLHPSSFPKCQEAIVSPQARVKLLNKIKMDTAL.

This is an uncharacterized protein from Homo sapiens (Human).